Consider the following 144-residue polypeptide: Phospholipase A2, membrane associated (144 aa).

An N-terminal signal peptide occupies residues 1 to 20 (MKTLLLLAVIMAIGLLQVHG). 7 disulfides stabilise this stretch: Cys-46/Cys-137, Cys-48/Cys-64, Cys-63/Cys-117, Cys-69/Cys-144, Cys-70/Cys-110, Cys-79/Cys-103, and Cys-97/Cys-108. Residues Tyr-47, Gly-49, and Ser-51 each coordinate Ca(2+). His-67 is an active-site residue. Asp-68 contributes to the Ca(2+) binding site. The active site involves Asp-111.

The protein belongs to the phospholipase A2 family. Ca(2+) is required as a cofactor.

Its subcellular location is the secreted. The protein resides in the cell membrane. The protein localises to the mitochondrion outer membrane. It carries out the reaction a 1,2-diacyl-sn-glycero-3-phosphoethanolamine + H2O = a 1-acyl-sn-glycero-3-phosphoethanolamine + a fatty acid + H(+). The enzyme catalyses 1-hexadecanoyl-2-(9Z-octadecenoyl)-sn-glycero-3-phosphoethanolamine + H2O = 1-hexadecanoyl-sn-glycero-3-phosphoethanolamine + (9Z)-octadecenoate + H(+). It catalyses the reaction 1-hexadecanoyl-2-(9Z,12Z-octadecadienoyl)-sn-glycero-3-phosphoethanolamine + H2O = 1-hexadecanoyl-sn-glycero-3-phosphoethanolamine + (9Z,12Z)-octadecadienoate + H(+). The catalysed reaction is 1-hexadecanoyl-2-(5Z,8Z,11Z,14Z-eicosatetraenoyl)-sn-glycero-3-phosphoethanolamine + H2O = 1-hexadecanoyl-sn-glycero-3-phosphoethanolamine + (5Z,8Z,11Z,14Z)-eicosatetraenoate + H(+). It carries out the reaction N-hexadecanoyl-1,2-di-(9Z-octadecenoyl)-sn-glycero-3-phosphoethanolamine + H2O = N-hexadecanoyl-1-(9Z-octadecenoyl)-sn-glycero-3-phosphoethanolamine + (9Z)-octadecenoate + H(+). The enzyme catalyses 1,2-dihexadecanoyl-sn-glycero-3-phospho-(1'-sn-glycerol) + H2O = 1-hexadecanoyl-sn-glycero-3-phospho-(1'-sn-glycerol) + hexadecanoate + H(+). It catalyses the reaction 1-hexadecanoyl-2-(9Z-octadecenoyl)-sn-glycero-3-phosphoglycerol + H2O = 1-hexadecanoyl-sn-glycero-3-phosphoglycerol + (9Z)-octadecenoate + H(+). The catalysed reaction is 1-hexadecanoyl-2-(9Z-octadecenoyl)-sn-glycero-3-phospho-(1'-sn-glycerol) + H2O = 1-hexadecanoyl-sn-glycero-3-phospho-(1'-sn-glycerol) + (9Z)-octadecenoate + H(+). It carries out the reaction a 1,2-diacyl-sn-glycero-3-phosphocholine + H2O = a 1-acyl-sn-glycero-3-phosphocholine + a fatty acid + H(+). The enzyme catalyses 1,2-dihexadecanoyl-sn-glycero-3-phosphocholine + H2O = 1-hexadecanoyl-sn-glycero-3-phosphocholine + hexadecanoate + H(+). It catalyses the reaction 1-hexadecanoyl-2-(9Z-octadecenoyl)-sn-glycero-3-phosphocholine + H2O = 1-hexadecanoyl-sn-glycero-3-phosphocholine + (9Z)-octadecenoate + H(+). The catalysed reaction is 1-hexadecanoyl-2-(9Z,12Z-octadecadienoyl)-sn-glycero-3-phosphocholine + H2O = (9Z,12Z)-octadecadienoate + 1-hexadecanoyl-sn-glycero-3-phosphocholine + H(+). It carries out the reaction 1-hexadecanoyl-2-(4Z,7Z,10Z,13Z,16Z,19Z-docosahexaenoyl)-sn-glycero-3-phosphocholine + H2O = (4Z,7Z,10Z,13Z,16Z,19Z)-docosahexaenoate + 1-hexadecanoyl-sn-glycero-3-phosphocholine + H(+). Functionally, secretory calcium-dependent phospholipase A2 that primarily targets extracellular phospholipids with implications in host antimicrobial defense, inflammatory response and tissue regeneration. Hydrolyzes the ester bond of the fatty acyl group attached at sn-2 position of phospholipids (phospholipase A2 activity) with preference for phosphatidylethanolamines and phosphatidylglycerols over phosphatidylcholines. Contributes to lipid remodeling of cellular membranes and generation of lipid mediators involved in pathogen clearance. Displays bactericidal activity against Gram-positive bacteria by directly hydrolyzing phospholipids of the bacterial membrane. Upon sterile inflammation, targets membrane phospholipids of extracellular mitochondria released from activated platelets, generating free unsaturated fatty acids such as arachidonate that is used by neighboring leukocytes to synthesize inflammatory eicosanoids such as leukotrienes. Simultaneously, by compromising mitochondrial membrane integrity, promotes the release in circulation of potent damage-associated molecular pattern molecules that activate the innate immune response. Plays a stem cell regulator role in the intestinal crypt. Within intracellular compartment mediates Paneth cell differentiation and its stem cell supporting functions by inhibiting Wnt signaling pathway in intestinal stem cell (ICS). Secreted in the intestinal lumen upon inflammation, acts in an autocrine way and promotes prostaglandin E2 synthesis that stimulates Wnt signaling pathway in ICS cells and tissue regeneration. May play a role in the biosynthesis of N-acyl ethanolamines that regulate energy metabolism and inflammation. Hydrolyzes N-acyl phosphatidylethanolamines to N-acyl lysophosphatidylethanolamines, which are further cleaved by a lysophospholipase D to release N-acyl ethanolamines. Independent of its catalytic activity, acts as a ligand for integrins. Binds to and activates integrins ITGAV:ITGB3, ITGA4:ITGB1 and ITGA5:ITGB1. Binds to a site (site 2) which is distinct from the classical ligand-binding site (site 1) and induces integrin conformational changes and enhanced ligand binding to site 1. Induces cell proliferation in an integrin-dependent manner. The polypeptide is Phospholipase A2, membrane associated (PLA2G2A) (Bos taurus (Bovine)).